Here is a 482-residue protein sequence, read N- to C-terminus: tRNA sulfurtransferase (482 aa).

The THUMP domain occupies 61–165 (PVIADALTRI…NDKLMLVKAR (105 aa)). ATP contacts are provided by residues 183-184 (LI), Lys265, Gly287, and Gln296. A disulfide bond links Cys344 and Cys456. A Rhodanese domain is found at 404–482 (FDADQVILDI…GFTNVKVYRP (79 aa)). The active-site Cysteine persulfide intermediate is the Cys456.

Belongs to the ThiI family.

It localises to the cytoplasm. The enzyme catalyses [ThiI sulfur-carrier protein]-S-sulfanyl-L-cysteine + a uridine in tRNA + 2 reduced [2Fe-2S]-[ferredoxin] + ATP + H(+) = [ThiI sulfur-carrier protein]-L-cysteine + a 4-thiouridine in tRNA + 2 oxidized [2Fe-2S]-[ferredoxin] + AMP + diphosphate. It carries out the reaction [ThiS sulfur-carrier protein]-C-terminal Gly-Gly-AMP + S-sulfanyl-L-cysteinyl-[cysteine desulfurase] + AH2 = [ThiS sulfur-carrier protein]-C-terminal-Gly-aminoethanethioate + L-cysteinyl-[cysteine desulfurase] + A + AMP + 2 H(+). It functions in the pathway cofactor biosynthesis; thiamine diphosphate biosynthesis. Catalyzes the ATP-dependent transfer of a sulfur to tRNA to produce 4-thiouridine in position 8 of tRNAs, which functions as a near-UV photosensor. Also catalyzes the transfer of sulfur to the sulfur carrier protein ThiS, forming ThiS-thiocarboxylate. This is a step in the synthesis of thiazole, in the thiamine biosynthesis pathway. The sulfur is donated as persulfide by IscS. This is tRNA sulfurtransferase from Serratia proteamaculans (strain 568).